The sequence spans 884 residues: Alanine--tRNA ligase (884 aa).

Zn(2+) is bound by residues histidine 565, histidine 569, cysteine 675, and histidine 679.

This sequence belongs to the class-II aminoacyl-tRNA synthetase family. Requires Zn(2+) as cofactor.

The protein resides in the cytoplasm. It catalyses the reaction tRNA(Ala) + L-alanine + ATP = L-alanyl-tRNA(Ala) + AMP + diphosphate. Catalyzes the attachment of alanine to tRNA(Ala) in a two-step reaction: alanine is first activated by ATP to form Ala-AMP and then transferred to the acceptor end of tRNA(Ala). Also edits incorrectly charged Ser-tRNA(Ala) and Gly-tRNA(Ala) via its editing domain. The protein is Alanine--tRNA ligase of Maricaulis maris (strain MCS10) (Caulobacter maris).